A 295-amino-acid polypeptide reads, in one-letter code: Polyisoprenoid diphosphate/phosphate phosphohydrolase PLPP6 (295 aa).

2 disordered regions span residues 1 to 39 and 61 to 90; these read MPSPRRSMEGRPLGVSASSSSSSPGSPAHGGGGGGSRFE and SESPVHRRGSFPLAAAGPSQSPAPPLPEED. At 1–132 the chain is on the cytoplasmic side; it reads MPSPRRSMEG…ESSSWGSVRP (132 aa). Residues 16-27 show a composition bias toward low complexity; it reads SASSSSSSPGSP. Residues Ser-26, Ser-36, and Ser-70 each carry the phosphoserine modification. A helical transmembrane segment spans residues 133–153; it reads LMKLLEISGHGIPWLLGTLYC. Topologically, residues 154-164 are lumenal; it reads LCRSDSWAGRE. Residues 165 to 185 form a helical membrane-spanning segment; sequence VLMNLLFALLLDLLLVALIKG. Residues 184-192 form a phosphatase sequence motif I region; the sequence is KGLVRRRRP. Residues 186 to 228 lie on the Cytoplasmic side of the membrane; it reads LVRRRRPAHNQMDMFVTLSVDKYSFPSGHATRAALMSRFILNH. The interval 211–214 is phosphatase sequence motif II; that stretch reads PSGH. Catalysis depends on His-214, which acts as the Proton donors. The chain crosses the membrane as a helical span at residues 229–249; the sequence is LVLAIPLRVLVVLWAFVLGLS. The tract at residues 249–260 is phosphatase sequence motif III; it reads SRVMLGRHNVTD. The Lumenal portion of the chain corresponds to 250-260; sequence RVMLGRHNVTD. His-256 acts as the Nucleophile in catalysis. A helical membrane pass occupies residues 261–281; the sequence is VAFGFFLGYMQYSIVDYCWLS. At 282 to 295 the chain is on the cytoplasmic side; that stretch reads PHNAPVLFLLWSQR.

The protein belongs to the PA-phosphatase related phosphoesterase family. Phosphorylation by PKC activates the phosphatase activity towards presqualene diphosphate. Widely expressed. Expressed in most organs, in particular gastrointestinal organs, spleen, placenta, kidney, thymus and brain.

Its subcellular location is the endoplasmic reticulum membrane. It is found in the nucleus envelope. The protein localises to the nucleus inner membrane. The enzyme catalyses presqualene diphosphate + H2O = presqualene phosphate + phosphate + H(+). The catalysed reaction is presqualene phosphate + H2O = presqualene alcohol + phosphate. It carries out the reaction (2E,6E)-farnesyl diphosphate + H2O = (2E,6E)-farnesyl phosphate + phosphate + H(+). It catalyses the reaction (2E,6E)-farnesyl phosphate + H2O = (2E,6E)-farnesol + phosphate. The enzyme catalyses (2E,6E,10E)-geranylgeranyl diphosphate + H2O = (2E,6E,10E)-geranylgeranyl phosphate + phosphate + H(+). The catalysed reaction is (2E,6E,10E)-geranylgeranyl phosphate + H2O = (2E,6E,10E)-geranylgeraniol + phosphate. It carries out the reaction (2E)-geranyl diphosphate + H2O = (2E)-geranyl phosphate + phosphate + H(+). It catalyses the reaction (2E)-geranyl phosphate + H2O = (2E)-geraniol + phosphate. The enzyme catalyses 1,2-dihexadecanoyl-sn-glycero-3-phosphate + H2O = 1,2-dihexadecanoyl-sn-glycerol + phosphate. Its activity is regulated as follows. Inhibited by propranolol. Not inhibited by N-ethylmaleimide or bromoenolactome. In terms of biological role, magnesium-independent polyisoprenoid diphosphatase that catalyzes the sequential dephosphorylation of presqualene, farnesyl, geranyl and geranylgeranyl diphosphates. Functions in the innate immune response through the dephosphorylation of presqualene diphosphate which acts as a potent inhibitor of the signaling pathways contributing to polymorphonuclear neutrophils activation. May regulate the biosynthesis of cholesterol and related sterols by dephosphorylating presqualene and farnesyl diphosphate, two key intermediates in this biosynthetic pathway. May also play a role in protein prenylation by acting on farnesyl diphosphate and its derivative geranylgeranyl diphosphate, two precursors for the addition of isoprenoid anchors to membrane proteins. Has a lower activity towards phosphatidic acid (PA), but through phosphatidic acid dephosphorylation may participate in the biosynthesis of phospholipids and triacylglycerols. May also act on ceramide-1-P, lysophosphatidic acid (LPA) and sphing-4-enine 1-phosphate/sphingosine-1-phosphate. The polypeptide is Polyisoprenoid diphosphate/phosphate phosphohydrolase PLPP6 (Homo sapiens (Human)).